A 500-amino-acid chain; its full sequence is Cytochrome P450 71B22 (500 aa).

Residues 1–21 (MSISLYFLLLLPLFLIFFKKL) form a helical membrane-spanning segment. Cysteine 441 is a binding site for heme.

The protein belongs to the cytochrome P450 family. The cofactor is heme.

Its subcellular location is the membrane. The sequence is that of Cytochrome P450 71B22 (CYP71B22) from Arabidopsis thaliana (Mouse-ear cress).